The sequence spans 155 residues: Vasotocin-neurophysin VT 1 (155 aa).

A signal peptide spans methionine 1–alanine 20. Cysteine 21 and cysteine 26 are disulfide-bonded. Residue glycine 29 is modified to Glycine amide. 7 disulfides stabilise this stretch: cysteine 41–cysteine 85, cysteine 44–cysteine 58, cysteine 52–cysteine 75, cysteine 59–cysteine 65, cysteine 92–cysteine 105, cysteine 99–cysteine 117, and cysteine 106–cysteine 111.

Belongs to the vasopressin/oxytocin family. Seven disulfide bonds are present in neurophysin.

It localises to the secreted. Vasotocin is probably an antidiuretic hormone. The chain is Vasotocin-neurophysin VT 1 from Oncorhynchus masou (Cherry salmon).